A 363-amino-acid chain; its full sequence is Pyruvate dehydrogenase E1 component subunit beta-1, mitochondrial (363 aa).

Residues 1-29 constitute a mitochondrion transit peptide; it reads MLGILRQRAIDGASTLRRTRFALVSARSY. Glutamate 92 is a binding site for thiamine diphosphate. The K(+) site is built by isoleucine 145, alanine 193, isoleucine 194, and aspartate 196. Residues lysine 247 and lysine 254 each participate in a glycyl lysine isopeptide (Lys-Gly) (interchain with G-Cter in ubiquitin) cross-link.

As to quaternary structure, tetramer of 2 alpha and 2 beta subunits. Thiamine diphosphate serves as cofactor. As to expression, expressed in roots, immature rosettes, and mature rosettes.

The protein localises to the mitochondrion matrix. The catalysed reaction is N(6)-[(R)-lipoyl]-L-lysyl-[protein] + pyruvate + H(+) = N(6)-[(R)-S(8)-acetyldihydrolipoyl]-L-lysyl-[protein] + CO2. Functionally, the pyruvate dehydrogenase complex catalyzes the overall conversion of pyruvate to acetyl-CoA and CO(2). It contains multiple copies of three enzymatic components: pyruvate dehydrogenase (E1), dihydrolipoamide acetyltransferase (E2) and lipoamide dehydrogenase (E3). The protein is Pyruvate dehydrogenase E1 component subunit beta-1, mitochondrial (PDH2) of Arabidopsis thaliana (Mouse-ear cress).